Reading from the N-terminus, the 218-residue chain is uncharacterized protein (218 aa).

This is an uncharacterized protein from Rickettsia prowazekii (strain Madrid E).